The sequence spans 681 residues: Probable glutamate carboxypeptidase LAMP1 (681 aa).

Topologically, residues 1–6 are cytoplasmic; that stretch reads MSKSKS. The helical; Signal-anchor for type II membrane protein transmembrane segment at 7–24 threads the bilayer; sequence LAFVIAALSYSFFSLFSS. Topologically, residues 25–681 are extracellular; that stretch reads PPKSHYHELF…ASLVLKGELI (657 aa). N-linked (GlcNAc...) asparagine glycosylation is found at Asn42, Asn140, Asn166, and Asn299. The segment at 241–527 is catalytic; the sequence is SVDGCERLSD…SVLGLVALRL (287 aa). Residues His333 and Asp343 each contribute to the Zn(2+) site. Residue Glu380 is the Nucleophile of the active site. Residues Glu381 and Asp409 each coordinate Zn(2+). Asn441 carries an N-linked (GlcNAc...) asparagine glycan. His493 is a binding site for Zn(2+). A glycan (N-linked (GlcNAc...) asparagine) is linked at Asn536.

It belongs to the peptidase M28 family. M28B subfamily. The cofactor is Zn(2+).

It localises to the endoplasmic reticulum membrane. The catalysed reaction is Release of an unsubstituted, C-terminal glutamyl residue, typically from Ac-Asp-Glu or folylpoly-gamma-glutamates.. In terms of biological role, acts in association with AMP1 to suppress ectopic stem cell niche formation in the shoot apical meristem (SAM) independently of cytokinin signaling pathway. This chain is Probable glutamate carboxypeptidase LAMP1, found in Arabidopsis thaliana (Mouse-ear cress).